The primary structure comprises 313 residues: Lactamase-like protein nscB (313 aa).

4 residues coordinate Zn(2+): histidine 97, histidine 99, aspartate 101, and histidine 102. Aspartate 101 acts as the Proton donor/acceptor in catalysis.

It belongs to the metallo-beta-lactamase superfamily. It depends on Zn(2+) as a cofactor.

It participates in secondary metabolite biosynthesis. Its function is as follows. Lactamase-like protein; part of the gene cluster that mediates the biosynthesis of neosartoricin B, a prenylated anthracenone that probably exhibits T-cell antiproliferative activity, suggestive of a physiological role as an immunosuppressive agent. The non-reducing polyketide synthase nscA probably synthesizes and cyclizes the decaketide backbone. The hydrolase nscB then mediates the product release through hydrolysis followed by spontaneous decarboxylation. The prenyltransferase nscD catalyzes the addition of the dimethylallyl group to the aromatic C5. The FAD-dependent monooxygenase nscC is then responsible for the stereospecific hydroxylation at C2. Neosartoricin B can be converted into two additional compounds neosartoricins C and D. Neosartoricin C is a spirocyclic compound that is cyclized through the attack of C3 hydroxyl on C14, followed by dehydration. On the other hand, neosartoricin D is a further cyclized compound in which attack of C2 on C14 in neosartoricin C results in the formation of the acetal-containing dioxabicyclo-octanone ring. Both of these compounds are novel and possibly represent related metabolites of the gene cluster. The polypeptide is Lactamase-like protein nscB (Arthroderma gypseum (strain ATCC MYA-4604 / CBS 118893) (Microsporum gypseum)).